The chain runs to 195 residues: NADH-quinone oxidoreductase subunit C (195 aa).

This sequence belongs to the complex I 30 kDa subunit family. NDH-1 is composed of 14 different subunits. Subunits NuoB, C, D, E, F, and G constitute the peripheral sector of the complex.

It is found in the cell inner membrane. The enzyme catalyses a quinone + NADH + 5 H(+)(in) = a quinol + NAD(+) + 4 H(+)(out). Functionally, NDH-1 shuttles electrons from NADH, via FMN and iron-sulfur (Fe-S) centers, to quinones in the respiratory chain. The immediate electron acceptor for the enzyme in this species is believed to be ubiquinone. Couples the redox reaction to proton translocation (for every two electrons transferred, four hydrogen ions are translocated across the cytoplasmic membrane), and thus conserves the redox energy in a proton gradient. This is NADH-quinone oxidoreductase subunit C from Laribacter hongkongensis (strain HLHK9).